The following is a 476-amino-acid chain: Fatty acid hydroperoxide lyase, chloroplastic (476 aa).

Residues Leu280 to Leu300 traverse the membrane as a helical segment. Residue Cys438 coordinates heme.

It belongs to the cytochrome P450 family. Heme is required as a cofactor. As to expression, highly expressed in developing flowers and in young leaves. Detected in stems and immature green fruits, but not in mature green and red fruits.

The protein localises to the plastid. It is found in the chloroplast outer membrane. With respect to regulation, reversibly inhibited by nordihydroguaiaretic acid (NDGA) and irreversibly by salicylic acid. Cytochrome P450 of the CYP74B subfamily involved in the biosynthesis of traumatin and C6 aldehydes. Metabolizes 13- but not 9-hydroperoxides of linoleic and linolenic acids. Can use 15S-hydroperoxy-11(Z),13(E),17(Z)-eicosatrienoic acid (15-HPET) and 13S-hydroperoxy-9(Z),11(E),15(Z)-octadecatrienoic acid (13-HPOT) as substrates, but only 5% activity with 13S-hydroperoxy-9(Z),11(E)-octadecadienoic acid (13-HPOD). Produces n-hexanal and 12-oxo-9(Z)-dodecanoic acid from 13-HPOD. The polypeptide is Fatty acid hydroperoxide lyase, chloroplastic (Solanum lycopersicum (Tomato)).